A 101-amino-acid chain; its full sequence is Acylphosphatase (101 aa).

The region spanning 12–98 (RAHVFVTGRV…EGLRGFEVKR (87 aa)) is the Acylphosphatase-like domain. Residues R27 and N45 contribute to the active site.

This sequence belongs to the acylphosphatase family.

It catalyses the reaction an acyl phosphate + H2O = a carboxylate + phosphate + H(+). This is Acylphosphatase (acyP) from Nostoc sp. (strain PCC 7120 / SAG 25.82 / UTEX 2576).